The following is a 342-amino-acid chain: Ketol-acid reductoisomerase (NADP(+)) (342 aa).

A KARI N-terminal Rossmann domain is found at 2–181 (VKVYYNGDIQ…GGARAGVLET (180 aa)). Residues 25–28 (YGSQ), Arg48, Ser52, and 82–85 (DEQQ) contribute to the NADP(+) site. The active site involves His107. Gly133 provides a ligand contact to NADP(+). Residues 182-327 (TFKEETETDL…RKLREMMPFV (146 aa)) form the KARI C-terminal knotted domain. Positions 190, 194, 226, and 230 each coordinate Mg(2+). Ser251 is a binding site for substrate.

It belongs to the ketol-acid reductoisomerase family. Requires Mg(2+) as cofactor.

The catalysed reaction is (2R)-2,3-dihydroxy-3-methylbutanoate + NADP(+) = (2S)-2-acetolactate + NADPH + H(+). It carries out the reaction (2R,3R)-2,3-dihydroxy-3-methylpentanoate + NADP(+) = (S)-2-ethyl-2-hydroxy-3-oxobutanoate + NADPH + H(+). It participates in amino-acid biosynthesis; L-isoleucine biosynthesis; L-isoleucine from 2-oxobutanoate: step 2/4. Its pathway is amino-acid biosynthesis; L-valine biosynthesis; L-valine from pyruvate: step 2/4. Involved in the biosynthesis of branched-chain amino acids (BCAA). Catalyzes an alkyl-migration followed by a ketol-acid reduction of (S)-2-acetolactate (S2AL) to yield (R)-2,3-dihydroxy-isovalerate. In the isomerase reaction, S2AL is rearranged via a Mg-dependent methyl migration to produce 3-hydroxy-3-methyl-2-ketobutyrate (HMKB). In the reductase reaction, this 2-ketoacid undergoes a metal-dependent reduction by NADPH to yield (R)-2,3-dihydroxy-isovalerate. The protein is Ketol-acid reductoisomerase (NADP(+)) of Bacillus pumilus (strain SAFR-032).